A 200-amino-acid polypeptide reads, in one-letter code: Large ribosomal subunit protein bL25 (200 aa).

Belongs to the bacterial ribosomal protein bL25 family. CTC subfamily. As to quaternary structure, part of the 50S ribosomal subunit; part of the 5S rRNA/L5/L18/L25 subcomplex. Contacts the 5S rRNA. Binds to the 5S rRNA independently of L5 and L18.

This is one of the proteins that binds to the 5S RNA in the ribosome where it forms part of the central protuberance. The protein is Large ribosomal subunit protein bL25 of Pseudomonas fluorescens (strain Pf0-1).